A 230-amino-acid chain; its full sequence is Ribosomal RNA small subunit methyltransferase I (230 aa).

This sequence belongs to the methyltransferase superfamily. RsmI family.

The protein resides in the cytoplasm. It catalyses the reaction cytidine(1402) in 16S rRNA + S-adenosyl-L-methionine = 2'-O-methylcytidine(1402) in 16S rRNA + S-adenosyl-L-homocysteine + H(+). Functionally, catalyzes the 2'-O-methylation of the ribose of cytidine 1402 (C1402) in 16S rRNA. In Hydrogenobaculum sp. (strain Y04AAS1), this protein is Ribosomal RNA small subunit methyltransferase I.